Here is a 337-residue protein sequence, read N- to C-terminus: Probable phospholipase A1 magnifin (337 aa).

The signal sequence occupies residues 1–21 (MNLKYLLLFFCLVQVLHYCYS). A propeptide spanning residues 22 to 33 (HGDPSLSNELDR) is cleaved from the precursor. The cysteines at positions 39 and 123 are disulfide-linked. Catalysis depends on serine 173, which acts as the Nucleophile. Aspartate 201 acts as the Charge relay system in catalysis. 2 disulfide bridges follow: cysteine 212–cysteine 217 and cysteine 255–cysteine 264. Histidine 266 (charge relay system) is an active-site residue. Cystine bridges form between cysteine 281–cysteine 305, cysteine 282–cysteine 330, and cysteine 298–cysteine 303.

Belongs to the AB hydrolase superfamily. Lipase family. In terms of tissue distribution, expressed by the venom gland.

The protein resides in the secreted. It catalyses the reaction a 1,2-diacyl-sn-glycero-3-phosphocholine + H2O = a 2-acyl-sn-glycero-3-phosphocholine + a fatty acid + H(+). Its function is as follows. Catalyzes the hydrolysis of phosphatidylcholine with phospholipase A1 activity. May act as an allergen and induce hemolytic activity. In vivo, induces dose-dependent platelet aggregation (nanomolar concentration) and induces thrombosis. This chain is Probable phospholipase A1 magnifin, found in Vespa magnifica (Hornet).